Consider the following 335-residue polypeptide: Epidermal differentiation-specific protein (335 aa).

Beta/gamma crystallin 'Greek key' domains are found at residues 2 to 42, 43 to 81, 87 to 126, and 127 to 169; these read NTIT…KIVG, QPWI…RLIT, PQIT…RVQR, and GAWA…YPLR.

This sequence belongs to the beta/gamma-crystallin family. In terms of tissue distribution, epidermis specific.

The polypeptide is Epidermal differentiation-specific protein (Cynops pyrrhogaster (Japanese fire-bellied newt)).